Reading from the N-terminus, the 158-residue chain is N5-carboxyaminoimidazole ribonucleotide mutase (158 aa).

Residues S10, D13, and R40 each coordinate substrate.

The protein belongs to the AIR carboxylase family. Class I subfamily.

The enzyme catalyses 5-carboxyamino-1-(5-phospho-D-ribosyl)imidazole + H(+) = 5-amino-1-(5-phospho-D-ribosyl)imidazole-4-carboxylate. It participates in purine metabolism; IMP biosynthesis via de novo pathway; 5-amino-1-(5-phospho-D-ribosyl)imidazole-4-carboxylate from 5-amino-1-(5-phospho-D-ribosyl)imidazole (N5-CAIR route): step 2/2. In terms of biological role, catalyzes the conversion of N5-carboxyaminoimidazole ribonucleotide (N5-CAIR) to 4-carboxy-5-aminoimidazole ribonucleotide (CAIR). In Saccharolobus solfataricus (strain ATCC 35092 / DSM 1617 / JCM 11322 / P2) (Sulfolobus solfataricus), this protein is N5-carboxyaminoimidazole ribonucleotide mutase.